Here is a 123-residue protein sequence, read N- to C-terminus: Ribosome-binding factor A (123 aa).

The protein belongs to the RbfA family. Monomer. Binds 30S ribosomal subunits, but not 50S ribosomal subunits or 70S ribosomes.

It localises to the cytoplasm. Its function is as follows. One of several proteins that assist in the late maturation steps of the functional core of the 30S ribosomal subunit. Associates with free 30S ribosomal subunits (but not with 30S subunits that are part of 70S ribosomes or polysomes). Required for efficient processing of 16S rRNA. May interact with the 5'-terminal helix region of 16S rRNA. This Desulfatibacillum aliphaticivorans protein is Ribosome-binding factor A.